The sequence spans 311 residues: tRNA dimethylallyltransferase (311 aa).

9-16 (GPTAVGKT) serves as a coordination point for ATP. 11-16 (TAVGKT) contacts substrate. An interaction with substrate tRNA region spans residues 34 to 37 (DSMQ).

This sequence belongs to the IPP transferase family. In terms of assembly, monomer. The cofactor is Mg(2+).

It carries out the reaction adenosine(37) in tRNA + dimethylallyl diphosphate = N(6)-dimethylallyladenosine(37) in tRNA + diphosphate. In terms of biological role, catalyzes the transfer of a dimethylallyl group onto the adenine at position 37 in tRNAs that read codons beginning with uridine, leading to the formation of N6-(dimethylallyl)adenosine (i(6)A). The protein is tRNA dimethylallyltransferase of Clostridium botulinum (strain Langeland / NCTC 10281 / Type F).